We begin with the raw amino-acid sequence, 171 residues long: MTVLKKNEKIKLELKEKLVMVNRVCKVTKGRRYFSFTALVIKGDENGVVGYGFGKAKEAQDAIYKAGEKAKKKLLKINIIKGGTIPHEQEAKYCGARVFICPASEGTGIIAGGAVRSVLEAVGLTNVLSKSKGSSNKINCIKATILALSKLRTVNTIALERGISISKILIG.

An S5 DRBM domain is found at 14-77; that stretch reads LKEKLVMVNR…EKAKKKLLKI (64 aa).

This sequence belongs to the universal ribosomal protein uS5 family. Part of the 30S ribosomal subunit. Contacts proteins S4 and S8.

With S4 and S12 plays an important role in translational accuracy. Its function is as follows. Located at the back of the 30S subunit body where it stabilizes the conformation of the head with respect to the body. This is Small ribosomal subunit protein uS5 from Karelsulcia muelleri (strain GWSS) (Sulcia muelleri).